Reading from the N-terminus, the 107-residue chain is Translation initiation factor IF-1, chloroplastic (107 aa).

The S1-like domain maps to 8-83 (REKKNPREAK…SKGRIIYRLP (76 aa)).

It belongs to the IF-1 family. As to quaternary structure, component of the 30S ribosomal translation pre-initiation complex which assembles on the 30S ribosome in the order IF-2 and IF-3, IF-1 and N-formylmethionyl-tRNA(fMet); mRNA recruitment can occur at any time during PIC assembly.

Its subcellular location is the plastid. The protein resides in the chloroplast. Functionally, one of the essential components for the initiation of protein synthesis. Stabilizes the binding of IF-2 and IF-3 on the 30S subunit to which N-formylmethionyl-tRNA(fMet) subsequently binds. Helps modulate mRNA selection, yielding the 30S pre-initiation complex (PIC). Upon addition of the 50S ribosomal subunit IF-1, IF-2 and IF-3 are released leaving the mature 70S translation initiation complex. The protein is Translation initiation factor IF-1, chloroplastic of Lolium perenne (Perennial ryegrass).